A 993-amino-acid polypeptide reads, in one-letter code: ATP-dependent DNA helicase MPH1 (993 aa).

Positions 94-261 constitute a Helicase ATP-binding domain; sequence IVHKSLFQNT…EVVNNLDISK (168 aa). 107-114 serves as a coordination point for ATP; sequence IPTGMGKT. The DEAH box motif lies at 209 to 212; sequence DEAH. In terms of domain architecture, Helicase C-terminal spans 507-655; the sequence is KVERLHRQEQ…CIDYKKSDRI (149 aa). The tract at residues 530–551 is disordered; it reads NDKLERSARRTGSSEEAQISGM. Over residues 539–551 the composition is skewed to polar residues; sequence RTGSSEEAQISGM. The FKH1-binding region stretch occupies residues 751 to 810; sequence LVTSNENPSKKRKIFKALDNLENDSTEEASSSLETEDEEVSDDNNVFIAEGQNGCQKDLE. A phosphothreonine mark is found at Thr-776 and Thr-785.

This sequence belongs to the DEAD box helicase family. DEAH subfamily. FANCM sub-subfamily. In terms of assembly, interacts with the MHF histone-fold complex composed of MHF1 and MHF2 to form the FANCM-MHF complex. Interacts with FHK1. Post-translationally, phosphorylation at both Thr-776 and Thr-785 is required for the interaction with FKH1.

It is found in the nucleus. It catalyses the reaction ATP + H2O = ADP + phosphate + H(+). Functionally, ATP-dependent DNA helicase involved in DNA damage repair by homologous recombination and in genome maintenance. Capable of unwinding D-loops. Plays a role in limiting crossover recombinants during mitotic DNA double-strand break (DSB) repair. Prevents crossovers between ectopic sequences by removing substrates for MUS81-MMS4 or RAD1-RAD10 cleavage. Component of a FANCM-MHF complex which promotes gene conversion at blocked replication forks, probably by reversal of the stalled fork. Binds to flap-structured DNA but not to non-flap nicked DNA, and participates in Okazaki fragment processing by stimulating the endonuclease activities of FEN1 and DNA2. Involved in recombination donor preference during mating-type switching via interaction with FKH1. The chain is ATP-dependent DNA helicase MPH1 from Saccharomyces cerevisiae (strain ATCC 204508 / S288c) (Baker's yeast).